Reading from the N-terminus, the 250-residue chain is Ribosomal RNA small subunit methyltransferase J (250 aa).

Residues 101-102 (RD), 117-118 (ER), 153-154 (SS), and Asp171 each bind S-adenosyl-L-methionine.

Belongs to the methyltransferase superfamily. RsmJ family.

It is found in the cytoplasm. It catalyses the reaction guanosine(1516) in 16S rRNA + S-adenosyl-L-methionine = N(2)-methylguanosine(1516) in 16S rRNA + S-adenosyl-L-homocysteine + H(+). Functionally, specifically methylates the guanosine in position 1516 of 16S rRNA. The protein is Ribosomal RNA small subunit methyltransferase J of Erwinia tasmaniensis (strain DSM 17950 / CFBP 7177 / CIP 109463 / NCPPB 4357 / Et1/99).